We begin with the raw amino-acid sequence, 283 residues long: Pantothenate synthetase (283 aa).

31 to 38 (MGALHDGH) contacts ATP. His38 functions as the Proton donor in the catalytic mechanism. Gln62 is a binding site for (R)-pantoate. Gln62 provides a ligand contact to beta-alanine. 148 to 151 (GKKD) is an ATP binding site. Position 154 (Gln154) interacts with (R)-pantoate. Residues Val177 and 185–188 (KSSR) each bind ATP.

It belongs to the pantothenate synthetase family. In terms of assembly, homodimer.

It localises to the cytoplasm. The catalysed reaction is (R)-pantoate + beta-alanine + ATP = (R)-pantothenate + AMP + diphosphate + H(+). The protein operates within cofactor biosynthesis; (R)-pantothenate biosynthesis; (R)-pantothenate from (R)-pantoate and beta-alanine: step 1/1. In terms of biological role, catalyzes the condensation of pantoate with beta-alanine in an ATP-dependent reaction via a pantoyl-adenylate intermediate. This is Pantothenate synthetase from Staphylococcus aureus (strain MSSA476).